The sequence spans 658 residues: Glycogen debranching enzyme (658 aa).

Aspartate 336 acts as the Nucleophile in catalysis. Glutamate 371 (proton donor) is an active-site residue.

Belongs to the glycosyl hydrolase 13 family.

It catalyses the reaction Hydrolysis of (1-&gt;6)-alpha-D-glucosidic linkages to branches with degrees of polymerization of three or four glucose residues in limit dextrin.. Its pathway is glycan degradation; glycogen degradation. Its function is as follows. Removes maltotriose and maltotetraose chains that are attached by 1,6-alpha-linkage to the limit dextrin main chain, generating a debranched limit dextrin. In Klebsiella pneumoniae (strain 342), this protein is Glycogen debranching enzyme.